The sequence spans 591 residues: Transcription factor COE1-A (591 aa).

Residues 63–66 (RKSN) form an interaction with DNA region. The C5-type zinc finger occupies 151-170 (CRVLLTHEIMCSRCCDKKSC). Interaction with DNA stretches follow at residues 197-204 (NCLKNAGN) and 236-239 (NNSK). The 83-residue stretch at 262 to 344 (PCIKAISPSE…CKGTPGRFIY (83 aa)) folds into the IPT/TIG domain. The segment covering 454–466 (ANQGFSRNTSSVS) has biased composition (polar residues). The disordered stretch occupies residues 454–484 (ANQGFSRNTSSVSPHGYVPSTTPQQSSYSTV). Residues 471–484 (VPSTTPQQSSYSTV) show a composition bias toward low complexity.

The protein belongs to the COE family. As to quaternary structure, forms either a homodimer or a heterodimer with a related family member. Detected in B cells.

Its subcellular location is the nucleus. In terms of biological role, transcriptional activator. The protein is Transcription factor COE1-A of Danio rerio (Zebrafish).